Reading from the N-terminus, the 203-residue chain is MSGILELEAKSRTEFGTGAARALRREGRVPAIIYGAGKTPISISLKEKEITKYYRKPAFISQLINLTIDKKQYKVLPKAVELHPVTDIVRHVDFVFLEAKTQKMEVPIVYEGKERALGVKRGGYFNIIKRRVILLCDVNNIPRNVTIDVTNMPIGTSLKSSQVELPKGCSFITKKEFVLATIIGRRGVKTEIEGEQEVAEAIQ.

The protein belongs to the bacterial ribosomal protein bL25 family. CTC subfamily. In terms of assembly, part of the 50S ribosomal subunit; part of the 5S rRNA/L5/L18/L25 subcomplex. Contacts the 5S rRNA. Binds to the 5S rRNA independently of L5 and L18.

This is one of the proteins that binds to the 5S RNA in the ribosome where it forms part of the central protuberance. In Rickettsia prowazekii (strain Madrid E), this protein is Large ribosomal subunit protein bL25.